The sequence spans 429 residues: Uracil permease (429 aa).

Residues 1-13 (MTRRAIGVSERPP) lie on the Cytoplasmic side of the membrane. A helical membrane pass occupies residues 14-37 (LLQTIPLSLQHLFAMFGATVLVPV). Topologically, residues 38–41 (LFHI) are periplasmic. Residues 42–61 (NPATVLLFNGIGTLLYLFIC) form a helical membrane-spanning segment. Topologically, residues 62–64 (KGK) are cytoplasmic. Residues 65–81 (IPAYLGSSFAFISPVLL) form a discontinuously helical membrane-spanning segment. Phenylalanine 73 is a uracil binding site. Over 82-89 (LLPLGYEV) the chain is Periplasmic. Residues 90–110 (ALGGFIMCGVLFCLVSFIVKK) traverse the membrane as a helical segment. The Cytoplasmic segment spans residues 111–122 (AGTGWLDVLFPP). A helical transmembrane segment spans residues 123 to 144 (AAMGAIVAVIGLELAGVAAGMA). The Periplasmic portion of the chain corresponds to 145–155 (GLLPAEGQTPD). The helical transmembrane segment at 156 to 171 (SKTIIISITTLAVTVL) threads the bilayer. Over 172–178 (GSVLFRG) the chain is Cytoplasmic. Residues 179–199 (FLAIIPILIGVLVGYALSFAM) traverse the membrane as a helical segment. Residues 200–224 (GIVDTTPIINAHWFALPTLYTPRFE) lie on the Periplasmic side of the membrane. A helical membrane pass occupies residues 225-248 (WFAILTILPAALVVIAEHVGHLVV). Glutamate 241 contributes to the uracil binding site. Over 249–261 (TANIVKKDLLRDP) the chain is Cytoplasmic. A helical membrane pass occupies residues 262–281 (GLHRSMFANGLSTVISGFFG). The discontinuously helical transmembrane segment at 282-298 (STPNTTYGENIGVMAIT) threads the bilayer. 2 residues coordinate uracil: glycine 289 and glutamate 290. At 299-301 (RVY) the chain is on the cytoplasmic side. The chain crosses the membrane as a helical span at residues 302 to 319 (STWVIGGAAIFAILLSCV). Residues 320 to 332 (GKLAAAIQMIPLP) are Periplasmic-facing. Residues 333–354 (VMGGVSLLLYGVIGASGIRVLI) traverse the membrane as a helical segment. Topologically, residues 355–365 (ESKVDYNKAQN) are cytoplasmic. An intramembrane region (discontinuously helical) is located at residues 366 to 401 (LILTSVILIIGVSGAKVNIGAAELKGMALATIVGIG). At 402-429 (LSLIFKLISVLRPEEVVLDAEDADITDK) the chain is on the cytoplasmic side.

The protein belongs to the nucleobase:cation symporter-2 (NCS2) (TC 2.A.40) family.

Its subcellular location is the cell inner membrane. It carries out the reaction uracil(in) + H(+)(in) = uracil(out) + H(+)(out). Transport of uracil in the cell. This chain is Uracil permease (uraA), found in Escherichia coli O157:H7.